The chain runs to 467 residues: MTCRTRFAPSPTGYLHIGGARTALYCWLEARHRGGQFVLRIEDTDRERSTQAAIDAILEAMEWLGLGYDEGPIYQTQRIARYQEVAEQLLAQGKAYYAYETREELDAMREAAMAKQEKPRYNGAAREQQLPYRDDPNRVIRFKNPLAGTVVFDDLIKGRIEIANSELDDMVIFRPDGYPTYNFAVVVDDWDMGITEVIRGDDHINNTPRQINIYEALGAPVPKFAHMPMILDEQGAKLSKRTGAADVMQYKDAGYLPHALINYLARLGWSHGDQELFSQQELLDLFDVKDVNSKAARLDMAKLGWVNQHYLKTDDPASIAPQLEYQLRKLGIDVAAGPAAADVVVALRERVQTLKEMAEKAVVWYQPLETYDEAAVIKHLKLGAEVPLGKAREMLAALNEWSVENVSAALHAAAAALELGMGKVAQPLRVAITGTQVSPDISQTVYLAGREGALKRIDAALIKIGAA.

The 'HIGH' region motif lies at 9–19 (PSPTGYLHIGG). The 'KMSKS' region motif lies at 237 to 241 (KLSKR). Residue lysine 240 coordinates ATP.

It belongs to the class-I aminoacyl-tRNA synthetase family. Glutamate--tRNA ligase type 1 subfamily. In terms of assembly, monomer.

It is found in the cytoplasm. It catalyses the reaction tRNA(Glu) + L-glutamate + ATP = L-glutamyl-tRNA(Glu) + AMP + diphosphate. Catalyzes the attachment of glutamate to tRNA(Glu) in a two-step reaction: glutamate is first activated by ATP to form Glu-AMP and then transferred to the acceptor end of tRNA(Glu). This is Glutamate--tRNA ligase from Xanthomonas campestris pv. campestris (strain B100).